The sequence spans 534 residues: Probable glycine dehydrogenase (decarboxylating) subunit 2 (534 aa).

Lysine 273 bears the N6-(pyridoxal phosphate)lysine mark.

The protein belongs to the GcvP family. C-terminal subunit subfamily. In terms of assembly, the glycine cleavage system is composed of four proteins: P, T, L and H. In this organism, the P 'protein' is a heterodimer of two subunits. Pyridoxal 5'-phosphate serves as cofactor.

The catalysed reaction is N(6)-[(R)-lipoyl]-L-lysyl-[glycine-cleavage complex H protein] + glycine + H(+) = N(6)-[(R)-S(8)-aminomethyldihydrolipoyl]-L-lysyl-[glycine-cleavage complex H protein] + CO2. In terms of biological role, the glycine cleavage system catalyzes the degradation of glycine. The P protein binds the alpha-amino group of glycine through its pyridoxal phosphate cofactor; CO(2) is released and the remaining methylamine moiety is then transferred to the lipoamide cofactor of the H protein. The polypeptide is Probable glycine dehydrogenase (decarboxylating) subunit 2 (Bacillus cereus (strain ATCC 14579 / DSM 31 / CCUG 7414 / JCM 2152 / NBRC 15305 / NCIMB 9373 / NCTC 2599 / NRRL B-3711)).